We begin with the raw amino-acid sequence, 62 residues long: DNA-directed RNA polymerase subunit Rpo10 (62 aa).

Zn(2+)-binding residues include Cys-6, Cys-9, Cys-43, and Cys-44.

It belongs to the archaeal Rpo10/eukaryotic RPB10 RNA polymerase subunit family. Part of the RNA polymerase complex. Zn(2+) is required as a cofactor.

It is found in the cytoplasm. The catalysed reaction is RNA(n) + a ribonucleoside 5'-triphosphate = RNA(n+1) + diphosphate. Functionally, DNA-dependent RNA polymerase (RNAP) catalyzes the transcription of DNA into RNA using the four ribonucleoside triphosphates as substrates. The chain is DNA-directed RNA polymerase subunit Rpo10 from Methanosarcina barkeri (strain Fusaro / DSM 804).